The primary structure comprises 341 residues: Hypophosphite import ATP-binding protein HtxD (341 aa).

In terms of domain architecture, ABC transporter spans 6 to 249 (LQLKNVGKSY…RVHALYQVPA (244 aa)). 38 to 45 (GTSGAGKS) contacts ATP. The tract at residues 278 to 341 (IHTPHTRAAP…TGRGQDRGPG (64 aa)) is disordered. Basic and acidic residues-rich tracts occupy residues 307–320 (ADRR…DRTT) and 327–341 (GGHD…RGPG).

The protein belongs to the ABC transporter superfamily. Phosphonates importer (TC 3.A.1.9.1) family. The complex is composed of two ATP-binding proteins (HtxD), two transmembrane proteins (HtxC and HtxE) and a solute-binding protein (HtxB).

It localises to the cell inner membrane. It carries out the reaction phosphinate(out) + ATP + H2O = phosphinate(in) + ADP + phosphate + H(+). Functionally, part of the ABC transporter complex HtxBCDE involved in hypophosphite import. Responsible for energy coupling to the transport system. The polypeptide is Hypophosphite import ATP-binding protein HtxD (htxD) (Stutzerimonas stutzeri (Pseudomonas stutzeri)).